The chain runs to 140 residues: Large ribosomal subunit protein uL11 (140 aa).

This sequence belongs to the universal ribosomal protein uL11 family. Part of the ribosomal stalk of the 50S ribosomal subunit. Interacts with L10 and the large rRNA to form the base of the stalk. L10 forms an elongated spine to which L12 dimers bind in a sequential fashion forming a multimeric L10(L12)X complex. One or more lysine residues are methylated.

Forms part of the ribosomal stalk which helps the ribosome interact with GTP-bound translation factors. The protein is Large ribosomal subunit protein uL11 of Solidesulfovibrio magneticus (strain ATCC 700980 / DSM 13731 / RS-1) (Desulfovibrio magneticus).